Here is a 339-residue protein sequence, read N- to C-terminus: Senescence-specific cysteine protease SAG39 (339 aa).

Positions 1 to 23 are cleaved as a signal peptide; that stretch reads MAMAKALLFAILGCLCLCSAVLA. 3 disulfides stabilise this stretch: Cys-144–Cys-187, Cys-178–Cys-220, and Cys-276–Cys-328. The active site involves Cys-147. Active-site residues include His-282 and Asn-303.

Belongs to the peptidase C1 family.

Its subcellular location is the vacuole. In terms of biological role, cysteine protease that may have a developmental senescence specific cell death function during apoptosis, heavy metal detoxification, and hypersensitive response. This Oryza sativa subsp. indica (Rice) protein is Senescence-specific cysteine protease SAG39.